The chain runs to 79 residues: Large ribosomal subunit protein bL28 (79 aa).

It belongs to the bacterial ribosomal protein bL28 family.

The protein is Large ribosomal subunit protein bL28 of Blochmanniella floridana.